The primary structure comprises 605 residues: Tungsten-containing aldehyde ferredoxin oxidoreductase (605 aa).

7 residues coordinate tungstopterin: Arg76, Asn93, Gly95, Arg182, Ala183, Gly185, and Arg186. Residues Cys288, Cys291, and Cys295 each coordinate [4Fe-4S] cluster. Residues Asp338, Leu342, Asp343, Arg444, Lys450, Asp489, and Leu493 each coordinate tungstopterin. [4Fe-4S] cluster is bound at residue Cys494. Leu495 is a binding site for tungstopterin.

It belongs to the AOR/FOR family. In terms of assembly, monomer. Homodimer. The cofactor is [4Fe-4S] cluster. Requires tungstopterin as cofactor.

The catalysed reaction is an aldehyde + 2 oxidized [2Fe-2S]-[ferredoxin] + H2O = a carboxylate + 2 reduced [2Fe-2S]-[ferredoxin] + 3 H(+). With respect to regulation, inhibited by arsenite, iodoacetate and cyanide. Functionally, aldehyde ferredoxin oxidoreductase with a broad substrate specificity. Catalyzes the oxidation of a range of aliphatic aldehydes to their corresponding carboxylic acids. In vitro can use crotonaldehyde, acetaldehyde, formaldehyde, butyraldehyde or glyceraldehyde as substrate, using methyl viologen or ferredoxin, but not NAD(P), as the electron acceptor. Does not oxidize glucose or glyceraldehyde 3-phosphate. May be involved in a pyroglycolytic pathway. The protein is Tungsten-containing aldehyde ferredoxin oxidoreductase of Pyrococcus furiosus (strain ATCC 43587 / DSM 3638 / JCM 8422 / Vc1).